The primary structure comprises 525 residues: Light-independent protochlorophyllide reductase subunit B (525 aa).

Asp-36 serves as a coordination point for [4Fe-4S] cluster. Asp-290 serves as the catalytic Proton donor. Residue 425-426 (GL) coordinates substrate.

The protein belongs to the ChlB/BchB/BchZ family. Protochlorophyllide reductase is composed of three subunits; ChlL, ChlN and ChlB. Forms a heterotetramer of two ChlB and two ChlN subunits. [4Fe-4S] cluster is required as a cofactor.

It catalyses the reaction chlorophyllide a + oxidized 2[4Fe-4S]-[ferredoxin] + 2 ADP + 2 phosphate = protochlorophyllide a + reduced 2[4Fe-4S]-[ferredoxin] + 2 ATP + 2 H2O. Its pathway is porphyrin-containing compound metabolism; chlorophyll biosynthesis (light-independent). Component of the dark-operative protochlorophyllide reductase (DPOR) that uses Mg-ATP and reduced ferredoxin to reduce ring D of protochlorophyllide (Pchlide) to form chlorophyllide a (Chlide). This reaction is light-independent. The NB-protein (ChlN-ChlB) is the catalytic component of the complex. In Prochlorococcus marinus (strain MIT 9312), this protein is Light-independent protochlorophyllide reductase subunit B.